A 471-amino-acid chain; its full sequence is Coagulation factor IX (471 aa).

The signal sequence occupies residues 1-19; that stretch reads MAKIPLILSFCLLEAFLGA. Residues 20–39 constitute a propeptide that is removed on maturation; the sequence is ESTVFIENKEASTVLSRTRR. The 46-residue stretch at 40 to 85 folds into the Gla domain; the sequence is GNSNRLEELIPGNLERECIEEKCSFEEAREVFENTEKTMEFWKIYI. Residues asparagine 41, glutamate 46, glutamate 47, glutamate 54, glutamate 56, glutamate 59, glutamate 60, glutamate 65, glutamate 66, and glutamate 69 each coordinate Ca(2+). 4-carboxyglutamate is present on residues glutamate 46, glutamate 47, glutamate 54, glutamate 56, glutamate 59, glutamate 60, glutamate 65, glutamate 66, glutamate 69, glutamate 72, glutamate 75, and glutamate 79. Glutamate 54 provides a ligand contact to Mg(2+). A disulfide bridge links cysteine 57 with cysteine 62. Glutamate 59 contributes to the Mg(2+) binding site. Glutamate 65 provides a ligand contact to Mg(2+). Glutamate 69 contributes to the Mg(2+) binding site. The Ca(2+) site is built by glutamate 75, glutamate 79, aspartate 86, glycine 87, and glutamine 89. Mg(2+) is bound by residues glutamate 75 and glutamate 79. The EGF-like 1; calcium-binding domain occupies 86-122; sequence DGDQCNSNPCKNGAVCKDGVSSYECMCPPGYGGRNCE. Cystine bridges form between cysteine 90–cysteine 101, cysteine 95–cysteine 110, cysteine 112–cysteine 121, cysteine 127–cysteine 138, cysteine 134–cysteine 148, cysteine 150–cysteine 163, cysteine 171–cysteine 345, cysteine 262–cysteine 278, cysteine 392–cysteine 406, and cysteine 417–cysteine 445. O-linked (Glc...) serine glycosylation is present at serine 92. Aspartate 103 provides a ligand contact to Ca(2+). (3R)-3-hydroxyaspartate is present on aspartate 103. Serine 107 bears the Phosphoserine mark. Positions 123 to 164 constitute an EGF-like 2 domain; that stretch reads IDSTCATKNGGCEHFCRHDTPQKAVCSCASGYKLHEDGKSCK. Positions 186–235 are cleaved as a propeptide — activation peptide; that stretch reads TENTIERWNITAHDEGDAHDEALDITEPPPPPTTSAAPAKIVPITKNDTR. A Peptidase S1 domain is found at 236 to 469; sequence VVGGYDSVKG…YVKWIRETTR (234 aa). Histidine 277 functions as the Charge relay system in the catalytic mechanism. Glutamate 291, asparagine 293, glutamate 296, and glutamate 301 together coordinate Ca(2+). The active-site Charge relay system is the aspartate 325. The active-site Charge relay system is serine 421.

This sequence belongs to the peptidase S1 family. As to quaternary structure, heterodimer of a light chain and a heavy chain; disulfide-linked. Activated by factor XIa, which excises the activation peptide. The propeptide can also be removed by snake venom protease. Activated by coagulation factor VIIa-tissue factor (F7-F3) complex in calcium-dependent manner. Post-translationally, the iron and 2-oxoglutarate dependent 3-hydroxylation of aspartate and asparagine is (R) stereospecific within EGF domains.

The protein resides in the secreted. The catalysed reaction is Selective cleavage of Arg-|-Ile bond in factor X to form factor Xa.. Its function is as follows. Factor IX is a vitamin K-dependent plasma protein that participates in the intrinsic pathway of blood coagulation by converting factor X to its active form in the presence of Ca(2+) ions, phospholipids, and factor VIIIa. The chain is Coagulation factor IX (F9) from Gallus gallus (Chicken).